Reading from the N-terminus, the 579-residue chain is 2-isopropylmalate synthase (579 aa).

A Pyruvate carboxyltransferase domain is found at 33-308; sequence PRWLSTDLRD…DPGIDFSDIN (276 aa). Residues aspartate 42, histidine 247, histidine 249, and asparagine 283 each contribute to the Mg(2+) site. The tract at residues 450–579 is regulatory domain; the sequence is SSDLPVPLAS…IVAPLVAAGR (130 aa).

Belongs to the alpha-IPM synthase/homocitrate synthase family. LeuA type 2 subfamily. As to quaternary structure, homodimer. It depends on Mg(2+) as a cofactor.

It is found in the cytoplasm. The catalysed reaction is 3-methyl-2-oxobutanoate + acetyl-CoA + H2O = (2S)-2-isopropylmalate + CoA + H(+). It participates in amino-acid biosynthesis; L-leucine biosynthesis; L-leucine from 3-methyl-2-oxobutanoate: step 1/4. Its function is as follows. Catalyzes the condensation of the acetyl group of acetyl-CoA with 3-methyl-2-oxobutanoate (2-ketoisovalerate) to form 3-carboxy-3-hydroxy-4-methylpentanoate (2-isopropylmalate). In Streptosporangium roseum (strain ATCC 12428 / DSM 43021 / JCM 3005 / KCTC 9067 / NCIMB 10171 / NRRL 2505 / NI 9100), this protein is 2-isopropylmalate synthase.